Consider the following 75-residue polypeptide: Small ribosomal subunit protein bS16 (75 aa).

The protein belongs to the bacterial ribosomal protein bS16 family.

In Helicobacter pylori (strain G27), this protein is Small ribosomal subunit protein bS16.